The primary structure comprises 118 residues: Cell division topological specificity factor (118 aa).

The segment at 86-118 (RSQAKAVSSQENGASSQEAVSSQESVSTPGAME) is disordered. The span at 99-112 (ASSQEAVSSQESVS) shows a compositional bias: low complexity.

This sequence belongs to the MinE family.

In terms of biological role, prevents the cell division inhibition by proteins MinC and MinD at internal division sites while permitting inhibition at polar sites. This ensures cell division at the proper site by restricting the formation of a division septum at the midpoint of the long axis of the cell. The polypeptide is Cell division topological specificity factor (Prochlorococcus marinus (strain MIT 9313)).